Here is a 431-residue protein sequence, read N- to C-terminus: Serine--tRNA ligase (431 aa).

Residues 41-66 are disordered; sequence QSRTQELQAERNARSKSIGEAARRGE. 240-242 provides a ligand contact to L-serine; sequence TSE. ATP is bound at residue 271 to 273; it reads RSE. Glutamate 294 contributes to the L-serine binding site. 358–361 lines the ATP pocket; that stretch reads EISS. Serine 392 contributes to the L-serine binding site.

It belongs to the class-II aminoacyl-tRNA synthetase family. Type-1 seryl-tRNA synthetase subfamily. As to quaternary structure, homodimer. The tRNA molecule binds across the dimer.

The protein localises to the cytoplasm. The catalysed reaction is tRNA(Ser) + L-serine + ATP = L-seryl-tRNA(Ser) + AMP + diphosphate + H(+). It catalyses the reaction tRNA(Sec) + L-serine + ATP = L-seryl-tRNA(Sec) + AMP + diphosphate + H(+). The protein operates within aminoacyl-tRNA biosynthesis; selenocysteinyl-tRNA(Sec) biosynthesis; L-seryl-tRNA(Sec) from L-serine and tRNA(Sec): step 1/1. Catalyzes the attachment of serine to tRNA(Ser). Is also able to aminoacylate tRNA(Sec) with serine, to form the misacylated tRNA L-seryl-tRNA(Sec), which will be further converted into selenocysteinyl-tRNA(Sec). This is Serine--tRNA ligase from Aeromonas salmonicida (strain A449).